The sequence spans 149 residues: Oligosaccharyltransferase complex subunit OSTC (149 aa).

At 1 to 32 the chain is on the cytoplasmic side; the sequence is METLYRVPFLVLECPNLKLKKPPWVHMPSAMT. Residues 33–53 form a helical membrane-spanning segment; that stretch reads VYALVVVSYFLITGGIIYDVI. Residues 54-83 are Extracellular-facing; sequence VEPPSVGSMTDEHGHQRPVAFLAYRVNGQY. Residues 84 to 104 form a helical membrane-spanning segment; sequence IMEGLASSFLFTMGGLGFIIL. The Cytoplasmic portion of the chain corresponds to 105–117; the sequence is DRSNAPNIPKLNR. A helical membrane pass occupies residues 118-138; it reads FLLLFIGFVCVLLSFFMARVF. Over 139–149 the chain is Extracellular; it reads MRMKLPGYLMG.

Belongs to the OSTC family. Component of STT3A-containing oligosaccharyl transferase (OST-A) complex. STT3A-containing complex assembly occurs through the formation of 3 subcomplexes. Subcomplex 1 contains RPN1 and TMEM258, subcomplex 2 contains the STT3A-specific subunits STT3A, DC2/OSTC, and KCP2 as well as the core subunit OST4, and subcomplex 3 contains RPN2, DAD1, and OST48. The OST-A complex can form stable complexes with the Sec61 complex or with both the Sec61 and TRAP complexes. Interacts with PSEN1 and NCSTN; indicative for an association with the gamma-secretase complex.

The protein resides in the endoplasmic reticulum. It localises to the membrane. It participates in protein modification; protein glycosylation. Its function is as follows. Subunit of STT3A-containing oligosaccharyl transferase (OST-A) complex that catalyzes the initial transfer of a defined glycan (Glc(3)Man(9)GlcNAc(2) in eukaryotes) from the lipid carrier dolichol-pyrophosphate to an asparagine residue within an Asn-X-Ser/Thr consensus motif in nascent polypeptide chains, the first step in protein N-glycosylation. N-glycosylation occurs cotranslationally and the complex associates with the Sec61 complex at the channel-forming translocon complex that mediates protein translocation across the endoplasmic reticulum (ER). Within the OST-A complex, acts as an adapter that anchors the OST-A complex to the Sec61 complex. May be involved in N-glycosylation of APP (amyloid-beta precursor protein). Can modulate gamma-secretase cleavage of APP by enhancing endoprotelysis of PSEN1. The polypeptide is Oligosaccharyltransferase complex subunit OSTC (Canis lupus familiaris (Dog)).